Here is a 237-residue protein sequence, read N- to C-terminus: UPF0174 protein YaaW (237 aa).

This sequence belongs to the UPF0174 family.

This Escherichia coli O157:H7 protein is UPF0174 protein YaaW.